A 432-amino-acid polypeptide reads, in one-letter code: Enolase 2 (432 aa).

Residue Gln163 coordinates (2R)-2-phosphoglycerate. The Proton donor role is filled by Glu205. Residues Asp242, Glu287, and Asp314 each contribute to the Mg(2+) site. (2R)-2-phosphoglycerate is bound by residues Lys339, Arg368, Ser369, and Lys390. The active-site Proton acceptor is Lys339.

The protein belongs to the enolase family. Homodimer. Probably forms octamers. Mg(2+) is required as a cofactor.

It is found in the cytoplasm. The protein localises to the secreted. The protein resides in the cell surface. It catalyses the reaction (2R)-2-phosphoglycerate = phosphoenolpyruvate + H2O. The protein operates within carbohydrate degradation; glycolysis; pyruvate from D-glyceraldehyde 3-phosphate: step 4/5. In terms of biological role, catalyzes the reversible conversion of 2-phosphoglycerate (2-PG) into phosphoenolpyruvate (PEP). It is essential for the degradation of carbohydrates via glycolysis. In Lactobacillus gasseri (strain ATCC 33323 / DSM 20243 / BCRC 14619 / CIP 102991 / JCM 1131 / KCTC 3163 / NCIMB 11718 / NCTC 13722 / AM63), this protein is Enolase 2.